Reading from the N-terminus, the 337-residue chain is Arylacetonitrilase (337 aa).

One can recognise a CN hydrolase domain in the interval Val-7–Leu-278. The active-site Proton acceptor is the Glu-47. Lys-127 is a catalytic residue. Cys-162 serves as the catalytic Nucleophile. The segment at Gln-311–Ala-337 is disordered.

It belongs to the carbon-nitrogen hydrolase superfamily. Nitrilase family.

The enzyme catalyses a nitrile + 2 H2O = a carboxylate + NH4(+). It carries out the reaction 4-chlorophenylacetonitrile + 2 H2O = 4-chlorophenylacetate + NH4(+). Its function is as follows. Nitrilase that hydrolyzes preferentially phenylacetonitrile, but also (R,S)-mandelonitrile, and 2-phenylpropionitrile. The protein is Arylacetonitrilase of Aspergillus niger (strain ATCC MYA-4892 / CBS 513.88 / FGSC A1513).